The sequence spans 157 residues: MRVGIGYDVHKLVADRKLIIGGVHIPYEKGLLGHSDADVLLHAIKDAILGAAALGDIGKHFPDTDERYKGANSLELLKEVSNLIKSKGYKIHNLDATIIAQKPKMASHIEQMRANIAAAINVDMDSVNVKATTTEGLGFVGVGEGIAANAIASIIKA.

Positions 8 and 10 each coordinate a divalent metal cation. 4-CDP-2-C-methyl-D-erythritol 2-phosphate-binding positions include 8 to 10 (DVH) and 34 to 35 (HS). H42 contributes to the a divalent metal cation binding site. Residues 56 to 58 (DIG), 61 to 65 (FPDTD), 100 to 106 (AQKPKMA), 132 to 135 (TTTE), and F139 each bind 4-CDP-2-C-methyl-D-erythritol 2-phosphate.

It belongs to the IspF family. In terms of assembly, homotrimer. A divalent metal cation is required as a cofactor.

It carries out the reaction 4-CDP-2-C-methyl-D-erythritol 2-phosphate = 2-C-methyl-D-erythritol 2,4-cyclic diphosphate + CMP. The protein operates within isoprenoid biosynthesis; isopentenyl diphosphate biosynthesis via DXP pathway; isopentenyl diphosphate from 1-deoxy-D-xylulose 5-phosphate: step 4/6. In terms of biological role, involved in the biosynthesis of isopentenyl diphosphate (IPP) and dimethylallyl diphosphate (DMAPP), two major building blocks of isoprenoid compounds. Catalyzes the conversion of 4-diphosphocytidyl-2-C-methyl-D-erythritol 2-phosphate (CDP-ME2P) to 2-C-methyl-D-erythritol 2,4-cyclodiphosphate (ME-CPP) with a corresponding release of cytidine 5-monophosphate (CMP). The chain is 2-C-methyl-D-erythritol 2,4-cyclodiphosphate synthase from Alkaliphilus oremlandii (strain OhILAs) (Clostridium oremlandii (strain OhILAs)).